A 202-amino-acid chain; its full sequence is LexA repressor 2 (202 aa).

The segment at residues 28–48 is a DNA-binding region (H-T-H motif); it reads LADIATRFGFASRSVARKHIT. Residues Ser-123 and Lys-160 each act as for autocatalytic cleavage activity in the active site.

Belongs to the peptidase S24 family. As to quaternary structure, homodimer.

The enzyme catalyses Hydrolysis of Ala-|-Gly bond in repressor LexA.. In terms of biological role, represses a number of genes involved in the response to DNA damage (SOS response), including recA and lexA. In the presence of single-stranded DNA, RecA interacts with LexA causing an autocatalytic cleavage which disrupts the DNA-binding part of LexA, leading to derepression of the SOS regulon and eventually DNA repair. The polypeptide is LexA repressor 2 (Pseudomonas putida (strain ATCC 47054 / DSM 6125 / CFBP 8728 / NCIMB 11950 / KT2440)).